A 2185-amino-acid chain; its full sequence is Genome polyprotein (2185 aa).

Residue glycine 2 is the site of N-myristoyl glycine; by host attachment. The Cytoplasmic portion of the chain corresponds to 2-1495 (GAQVSTQKTG…HVSRAFICLQ (1494 aa)). Positions 568 to 584 (FFQGPVEDAITAAIGRV) are amphipathic alpha-helix. Catalysis depends on for protease 2A activity residues histidine 872 and aspartate 890. Zn(2+) contacts are provided by cysteine 907 and cysteine 909. The active-site For protease 2A activity is cysteine 961. Residues cysteine 967 and histidine 969 each contribute to the Zn(2+) site. The segment at 1101-1173 (NNSWLKKFTE…EQSAPSQSDQ (73 aa)) is membrane-binding. The interval 1101–1239 (NNSWLKKFTE…SPGAGKSVAT (139 aa)) is oligomerization. Residues 1122 to 1126 (AVKIQ) are RNA-binding. One can recognise an SF3 helicase domain in the interval 1205–1361 (EKKMSNYIQF…SMYSQNGKIN (157 aa)). Positions 1369, 1381, and 1386 each coordinate Zn(2+). A C4-type; degenerate zinc finger spans residues 1369–1386 (CDDECCPVNFKKCCPLVC). An RNA-binding region spans residues 1413 to 1420 (EYNHRHSV). Residues 1424–1429 (LEALFQ) are oligomerization. Residues 1496–1511 (ALTTFVSVAGIIYIIY) lie within the membrane without spanning it. Over 1512–2185 (KLFAGFQGAY…TLRRKWLDSF (674 aa)) the chain is Cytoplasmic. At tyrosine 1521 the chain carries O-(5'-phospho-RNA)-tyrosine. In terms of domain architecture, Peptidase C3 spans 1541 to 1719 (GPAFEFAVAM…FSAALLKHYF (179 aa)). Residues histidine 1580, glutamate 1611, and cysteine 1687 each act as for protease 3C activity in the active site. The region spanning 1950 to 2066 (GHLIAFDYSG…SYPWPIDASL (117 aa)) is the RdRp catalytic domain. Mg(2+) is bound by residues aspartate 1956 and aspartate 2052.

The protein belongs to the picornaviruses polyprotein family. In terms of assembly, interacts with capsid protein VP1 and capsid protein VP3 to form heterotrimeric protomers. As to quaternary structure, interacts with capsid protein VP0, and capsid protein VP3 to form heterotrimeric protomers. Five protomers subsequently associate to form pentamers which serve as building blocks for the capsid. Interacts with capsid protein VP2, capsid protein VP3 and capsid protein VP4 following cleavage of capsid protein VP0. Interacts with host CD55. Interacts with host CXADR. Interacts with capsid protein VP1 and capsid protein VP3 in the mature capsid. In terms of assembly, interacts with capsid protein VP0 and capsid protein VP1 to form heterotrimeric protomers. Five protomers subsequently associate to form pentamers which serve as building blocks for the capsid. Interacts with capsid protein VP4 in the mature capsid. Interacts with protein 2C; this interaction may be important for virion morphogenesis. As to quaternary structure, interacts with capsid protein VP1 and capsid protein VP3. Homodimer. In terms of assembly, homohexamer; forms a hexameric ring structure with 6-fold symmetry characteristic of AAA+ ATPases. Interacts (via N-terminus) with host RTN3 (via reticulon domain); this interaction is important for viral replication. Interacts with capsid protein VP3; this interaction may be important for virion morphogenesis. As to quaternary structure, interacts with protein 3CD. Homodimer. Interacts with host GBF1. Interacts (via GOLD domain) with host ACBD3 (via GOLD domain); this interaction allows the formation of a viral protein 3A/ACBD3 heterotetramer with a 2:2 stoichiometry, which will stimulate the recruitment of host PI4KB in order to synthesize PI4P at the viral RNA replication sites. In terms of assembly, interacts with RNA-directed RNA polymerase. As to quaternary structure, interacts with host TICAM1 (via C-terminus). Interacts with protein 3AB and with RNA-directed RNA polymerase. In terms of assembly, interacts with Viral protein genome-linked and with protein 3CD. Requires Mg(2+) as cofactor. Specific enzymatic cleavages in vivo by the viral proteases yield processing intermediates and the mature proteins. In terms of processing, myristoylation is required for the formation of pentamers during virus assembly. Further assembly of 12 pentamers and a molecule of genomic RNA generates the provirion. Post-translationally, during virion maturation, immature virions are rendered infectious following cleavage of VP0 into VP4 and VP2. This maturation seems to be an autocatalytic event triggered by the presence of RNA in the capsid and it is followed by a conformational change infectious virion. Myristoylation is required during RNA encapsidation and formation of the mature virus particle. In terms of processing, VPg is uridylylated by the polymerase into VPg-pUpU. This acts as a nucleotide-peptide primer for the genomic RNA replication.

The protein resides in the virion. The protein localises to the host cytoplasm. It is found in the host cytoplasmic vesicle membrane. Its subcellular location is the host nucleus. It catalyses the reaction a ribonucleoside 5'-triphosphate + H2O = a ribonucleoside 5'-diphosphate + phosphate + H(+). The catalysed reaction is Selective cleavage of Tyr-|-Gly bond in the picornavirus polyprotein.. The enzyme catalyses RNA(n) + a ribonucleoside 5'-triphosphate = RNA(n+1) + diphosphate. It carries out the reaction Selective cleavage of Gln-|-Gly bond in the poliovirus polyprotein. In other picornavirus reactions Glu may be substituted for Gln, and Ser or Thr for Gly.. With respect to regulation, replication or transcription is subject to high level of random mutations by the nucleotide analog ribavirin. Forms an icosahedral capsid of pseudo T=3 symmetry with capsid proteins VP2 and VP3. The capsid is 300 Angstroms in diameter, composed of 60 copies of each capsid protein and enclosing the viral positive strand RNA genome. Capsid protein VP1 mainly forms the vertices of the capsid. Capsid protein VP1 interacts with host CD55 and CXADR to provide virion attachment to target host cells. This attachment induces virion internalization. Tyrosine kinases are probably involved in the entry process. After binding to its receptor, the capsid undergoes conformational changes. Capsid protein VP1 N-terminus (that contains an amphipathic alpha-helix) and capsid protein VP4 are externalized. Together, they shape a pore in the host membrane through which viral genome is translocated to host cell cytoplasm. Functionally, forms an icosahedral capsid of pseudo T=3 symmetry with capsid proteins VP2 and VP3. The capsid is 300 Angstroms in diameter, composed of 60 copies of each capsid protein and enclosing the viral positive strand RNA genome. Its function is as follows. Lies on the inner surface of the capsid shell. After binding to the host receptor, the capsid undergoes conformational changes. Capsid protein VP4 is released, Capsid protein VP1 N-terminus is externalized, and together, they shape a pore in the host membrane through which the viral genome is translocated into the host cell cytoplasm. In terms of biological role, component of immature procapsids, which is cleaved into capsid proteins VP4 and VP2 after maturation. Allows the capsid to remain inactive before the maturation step. Cysteine protease that cleaves viral polyprotein and specific host proteins. It is responsible for the autocatalytic cleavage between the P1 and P2 regions, which is the first cleavage occurring in the polyprotein. Also cleaves the host translation initiation factor EIF4G1, in order to shut down the capped cellular mRNA translation. Inhibits the host nucleus-cytoplasm protein and RNA trafficking by cleaving host members of the nuclear pores. Counteracts stress granule formation probably by antagonizing its assembly or promoting its dissassembly. Cleaves and inhibits host IFIH1/MDA5, thereby inhibiting the type-I IFN production and the establishment of the antiviral state. Cleaves and inhibits host MAVS, thereby inhibiting the type-I IFN production and the establishment of the antiviral state. Functionally, plays an essential role in the virus replication cycle by acting as a viroporin. Creates a pore in the host endoplasmic reticulum and as a consequence releases Ca2+ in the cytoplasm of infected cell. In turn, high levels of cytoplasmic calcium may trigger membrane trafficking and transport of viral ER-associated proteins to viroplasms, sites of viral genome replication. Its function is as follows. Induces and associates with structural rearrangements of intracellular membranes. Displays RNA-binding, nucleotide binding and NTPase activities. May play a role in virion morphogenesis and viral RNA encapsidation by interacting with the capsid protein VP3. In terms of biological role, localizes the viral replication complex to the surface of membranous vesicles. Together with protein 3CD binds the Cis-Active RNA Element (CRE) which is involved in RNA synthesis initiation. Acts as a cofactor to stimulate the activity of 3D polymerase, maybe through a nucleid acid chaperone activity. Localizes the viral replication complex to the surface of membranous vesicles. It inhibits host cell endoplasmic reticulum-to-Golgi apparatus transport and causes the disassembly of the Golgi complex, possibly through GBF1 interaction. This would result in depletion of MHC, trail receptors and IFN receptors at the host cell surface. Plays an essential role in viral RNA replication by recruiting ACBD3 and PI4KB at the viral replication sites, thereby allowing the formation of the rearranged membranous structures where viral replication takes place. Functionally, acts as a primer for viral RNA replication and remains covalently bound to viral genomic RNA. VPg is uridylylated prior to priming replication into VPg-pUpU. The oriI viral genomic sequence may act as a template for this. The VPg-pUpU is then used as primer on the genomic RNA poly(A) by the RNA-dependent RNA polymerase to replicate the viral genome. During genome replication, the VPg-RNA linkage is removed by the host TDP2, thereby accelerating replication. During the late stage of the replication cycle, host TDP2 is excluded from sites of viral RNA synthesis and encapsidation, allowing for the generation of progeny virions. Its function is as follows. Involved in the viral replication complex and viral polypeptide maturation. It exhibits protease activity with a specificity and catalytic efficiency that is different from protease 3C. Protein 3CD lacks polymerase activity. Protein 3CD binds to the 5'UTR of the viral genome. In terms of biological role, major viral protease that mediates proteolytic processing of the polyprotein. Cleaves host EIF5B, contributing to host translation shutoff. Cleaves also host PABPC1, contributing to host translation shutoff. Cleaves and inhibits host RIGI, thereby inhibiting the type-I IFN production and the establishment of the antiviral state. Cleaves and inhibits host MAVS, thereby inhibiting the type-I IFN production and the establishment of the antiviral state. Cleaves and inhibits host TICAM1/TRIF, thereby inhibiting the type-I IFN production. Cleaves host NLRP1, triggers host N-glycine-mediated degradation of the autoinhibitory NLRP1 N-terminal fragment. Cleaves host transcription factor TFEB, thereby disrupting host lysosomal functions and enhancing viral infection. Replicates the viral genomic RNA on the surface of intracellular membranes. May form linear arrays of subunits that propagate along a strong head-to-tail interaction called interface-I. Covalently attaches UMP to a tyrosine of VPg, which is used to prime RNA synthesis. The positive stranded RNA genome is first replicated at virus induced membranous vesicles, creating a dsRNA genomic replication form. This dsRNA is then used as template to synthesize positive stranded RNA genomes. ss(+)RNA genomes are either translated, replicated or encapsidated. The protein is Genome polyprotein of Coxsackievirus B3 (strain Nancy).